The chain runs to 291 residues: 4-hydroxy-tetrahydrodipicolinate synthase (291 aa).

Threonine 45 is a binding site for pyruvate. Tyrosine 133 functions as the Proton donor/acceptor in the catalytic mechanism. The Schiff-base intermediate with substrate role is filled by lysine 161. Residue isoleucine 203 participates in pyruvate binding.

The protein belongs to the DapA family. In terms of assembly, homotetramer; dimer of dimers.

It localises to the cytoplasm. It carries out the reaction L-aspartate 4-semialdehyde + pyruvate = (2S,4S)-4-hydroxy-2,3,4,5-tetrahydrodipicolinate + H2O + H(+). It functions in the pathway amino-acid biosynthesis; L-lysine biosynthesis via DAP pathway; (S)-tetrahydrodipicolinate from L-aspartate: step 3/4. Its function is as follows. Catalyzes the condensation of (S)-aspartate-beta-semialdehyde [(S)-ASA] and pyruvate to 4-hydroxy-tetrahydrodipicolinate (HTPA). This is 4-hydroxy-tetrahydrodipicolinate synthase from Laribacter hongkongensis (strain HLHK9).